Here is a 212-residue protein sequence, read N- to C-terminus: uncharacterized protein (212 aa).

Residues 105 to 187 (NTIYLVEGDF…QVKVVQLKGK (83 aa)) enclose the Toprim domain.

This is an uncharacterized protein from Mycoplasma pneumoniae (strain ATCC 29342 / M129 / Subtype 1) (Mycoplasmoides pneumoniae).